We begin with the raw amino-acid sequence, 153 residues long: Succinate dehydrogenase assembly factor 2, mitochondrial (153 aa).

The protein belongs to the SDHAF2 family. As to quaternary structure, interacts with the flavoprotein subunit within the SDH catalytic dimer.

It is found in the mitochondrion matrix. In terms of biological role, plays an essential role in the assembly of succinate dehydrogenase (SDH), an enzyme complex (also referred to as respiratory complex II) that is a component of both the tricarboxylic acid (TCA) cycle and the mitochondrial electron transport chain, and which couples the oxidation of succinate to fumarate with the reduction of ubiquinone (coenzyme Q) to ubiquinol. Required for flavinylation (covalent attachment of FAD) of the flavoprotein subunit of the SDH catalytic dimer. The polypeptide is Succinate dehydrogenase assembly factor 2, mitochondrial (Candida glabrata (strain ATCC 2001 / BCRC 20586 / JCM 3761 / NBRC 0622 / NRRL Y-65 / CBS 138) (Yeast)).